Reading from the N-terminus, the 417-residue chain is uncharacterized protein (417 aa).

Residues 10–30 (ALVCFSILSILVLACGCVNTP) traverse the membrane as a helical segment. The segment at 84 to 106 (QENHPLQSNQNYEQTNGNFNEEN) is disordered. Residues 86–106 (NHPLQSNQNYEQTNGNFNEEN) show a composition bias toward polar residues. The chain crosses the membrane as a helical span at residues 148-168 (LYYIKVIDPIVGGLAGIDIYV).

The protein resides in the cell membrane. This is an uncharacterized protein from Methanocaldococcus jannaschii (strain ATCC 43067 / DSM 2661 / JAL-1 / JCM 10045 / NBRC 100440) (Methanococcus jannaschii).